The following is a 2493-amino-acid chain: Adenylate cyclase (2493 aa).

Composition is skewed to polar residues over residues 1 to 18 (MLFTMQFTTRSTVASPEQ), 42 to 51 (RDSNGSSNFT), 60 to 78 (SQQYDDTSTNSFHSSQPDI), 129 to 147 (PANSHSDSLPGPSTHSISP), and 197 to 210 (APFSSSHSNRTSVN). Disordered stretches follow at residues 1-85 (MLFT…SSTL), 99-148 (FEHA…ISPS), 197-325 (APFS…SSLS), 355-444 (NSPS…QSQS), 475-565 (GSIT…VNML), 616-660 (QAPV…KTSY), 753-832 (NVGE…GSKS), 854-882 (ALVQQQSQSQNHHQPSPNVRPTSRGGAGA), and 904-967 (RPSK…ATGT). The span at 211–233 (PSAASTASPSTSAATRTRPRGGT) shows a compositional bias: low complexity. Polar residues-rich tracts occupy residues 234–246 (NASQYNTLDTSFG) and 253–264 (LSSSRSQYSLRP). Composition is skewed to basic residues over residues 287 to 303 (AVKKTRNPFGFLKKKSS) and 404 to 422 (HLKKDPRKRIKGVRHHLAK). Residues 425 to 434 (KPGEDADSAR) show a composition bias toward basic and acidic residues. Over residues 500–525 (PSPSQTPIAERQTSVTSTVESPSHAS) the composition is skewed to polar residues. Positions 534-555 (SLRTPSRTTASTSTSSASTVLS) are enriched in low complexity. Residues 630 to 640 (TDSELSDRKDS) show a composition bias toward basic and acidic residues. Residues 641–660 (VVSTHSMRSNHSGISPKTSY) show a composition bias toward polar residues. A compositionally biased stretch (acidic residues) spans 754-763 (VGEEEDDDDD). 2 stretches are compositionally biased toward low complexity: residues 780 to 791 (SSSGISSTHASS) and 854 to 870 (ALVQQQSQSQNHHQPSP). Positions 913–935 (RPNTAGSVGATRPSTTTLGSTLS) are enriched in polar residues. One can recognise a Ras-associating domain in the interval 970–1072 (RNHFIRVYKT…LRFVFRPDSV (103 aa)). 22 LRR repeats span residues 1086-1107 (TFQHLDLHSRNLEMVPIFLYKH), 1110-1132 (WIVSLDLSGNPMSDLPLDFVQLC), 1134-1155 (SLRTLRLSNLALKRIPQSVRHS), 1157-1178 (TLTHLDVSNNRIVELAHVSLDL), 1181-1202 (ELMSLKVQNNRLFDLPSYFSSI), 1204-1225 (TLRNLNISNNRFEEFPKVICDV), 1227-1248 (SLVDLDVSFNSITELPAEIANL), 1250-1271 (NLERFILAGNELEKLPDSMSEL), 1273-1294 (SLRTIDLRRNKVQDVSSLLGLP), 1295-1316 (RLQNIQAESNNIKSFEATLGPQ), 1317-1336 (LTQVELGRNPLSKVRIAALT), 1339-1360 (DLTSLDLSSTNMTRLEEGLFPQ), 1363-1385 (ALVKLTLDGNQLVVLPDTLGDLK), 1386-1407 (RLEMLSCSNNLLATLPESIGDL), 1409-1430 (ALKELLVHNNNLKTLPQTLWLC), 1432-1453 (SLAHINLSSNLLESFPAVPDIR), 1511-1534 (SLQKLRLGDNRLGDDVFSVLSELT), 1535-1556 (SLEVLNLSFNEIFEIPDFSLQT), 1559-1580 (KLRELYISGNQLSTIPSDDLVV), 1583-1605 (ELRILHLNCNKLTTLPTELGKLK), 1606-1628 (KLANLDVGNNVLKYNIANWHYDW), and 1635-1654 (ELRYLNLSGNTRLEIKTKLS). One can recognise a PPM-type phosphatase domain in the interval 1710–2000 (AYGIADALGK…ESIMVMVISV (291 aa)). In terms of domain architecture, Guanylate cyclase spans 2058 to 2194 (ALVFTDIKNS…PMVNRAARIS (137 aa)). Mg(2+) contacts are provided by aspartate 2063 and aspartate 2105. Disordered stretches follow at residues 2220–2241 (DESSTAGGAGGEGENLEKTEEE), 2354–2378 (EADRSQPSTPLDDNGRNPIDGHGTA), and 2467–2493 (PPRASTSALSLPSPRTSPRNRLLELVP). Over residues 2470–2485 (ASTSALSLPSPRTSPR) the composition is skewed to polar residues.

Belongs to the adenylyl cyclase class-3 family. The cofactor is Mg(2+).

It catalyses the reaction ATP = 3',5'-cyclic AMP + diphosphate. Its function is as follows. Plays essential roles in regulation of cellular metabolism by catalyzing the synthesis of a second messenger, cAMP. In Mycosarcoma maydis (Corn smut fungus), this protein is Adenylate cyclase (UAC1).